Here is a 2151-residue protein sequence, read N- to C-terminus: Protein PRR14L (2151 aa).

2 stretches are compositionally biased toward basic and acidic residues: residues 112–123 and 134–154; these read KRSESMEPKVFR and EPSE…EEKT. Disordered stretches follow at residues 112 to 160, 206 to 225, and 314 to 350; these read KRSE…SQED, GTKT…KDLS, and QLHG…SDLS. S157 is modified (phosphoserine). Residues 322-350 are compositionally biased toward polar residues; that stretch reads QPSSTHDSPTATSPLKENSEVSCFTSDLS. 2 positions are modified to phosphoserine: S582 and S945. A disordered region spans residues 974 to 1017; sequence SNQNRPDECKSEGQSAKEMLSSDQRETVTEPHGEVNHNQKDLLV. A compositionally biased stretch (basic and acidic residues) spans 996-1013; that stretch reads DQRETVTEPHGEVNHNQK. The residue at position 1029 (S1029) is a Phosphoserine. Over residues 1091–1103 the composition is skewed to basic and acidic residues; sequence DSRSTLSRRELDA. Disordered stretches follow at residues 1091 to 1115, 1178 to 1226, 1782 to 1802, and 1986 to 2012; these read DSRS…DSDF, DSHY…SCHD, TGVH…PLQD, and AACP…KVSQ. Positions 1178–1187 are enriched in polar residues; sequence DSHYGQQDKG. The span at 1188–1201 shows a compositional bias: basic and acidic residues; sequence TSLRETQEMTEGSR.

This is Protein PRR14L (PRR14L) from Homo sapiens (Human).